A 368-amino-acid polypeptide reads, in one-letter code: Probable protein phosphatase 2C 58 (368 aa).

Residues K23–F329 enclose the PPM-type phosphatase domain. D57, G58, D272, and D320 together coordinate Mn(2+). The segment at N336 to S368 is disordered. Positions H356–S368 are enriched in basic and acidic residues.

It belongs to the PP2C family. Requires Mg(2+) as cofactor. It depends on Mn(2+) as a cofactor.

The catalysed reaction is O-phospho-L-seryl-[protein] + H2O = L-seryl-[protein] + phosphate. It carries out the reaction O-phospho-L-threonyl-[protein] + H2O = L-threonyl-[protein] + phosphate. This chain is Probable protein phosphatase 2C 58, found in Oryza sativa subsp. japonica (Rice).